Reading from the N-terminus, the 320-residue chain is Aspartate carbamoyltransferase catalytic subunit (320 aa).

Arg-68 and Thr-69 together coordinate carbamoyl phosphate. Residue Lys-96 coordinates L-aspartate. 3 residues coordinate carbamoyl phosphate: Arg-118, His-148, and Gln-151. 2 residues coordinate L-aspartate: Arg-181 and Arg-236. The carbamoyl phosphate site is built by Gly-277 and Pro-278.

The protein belongs to the aspartate/ornithine carbamoyltransferase superfamily. ATCase family. In terms of assembly, heterododecamer (2C3:3R2) of six catalytic PyrB chains organized as two trimers (C3), and six regulatory PyrI chains organized as three dimers (R2).

The catalysed reaction is carbamoyl phosphate + L-aspartate = N-carbamoyl-L-aspartate + phosphate + H(+). The protein operates within pyrimidine metabolism; UMP biosynthesis via de novo pathway; (S)-dihydroorotate from bicarbonate: step 2/3. Its function is as follows. Catalyzes the condensation of carbamoyl phosphate and aspartate to form carbamoyl aspartate and inorganic phosphate, the committed step in the de novo pyrimidine nucleotide biosynthesis pathway. The protein is Aspartate carbamoyltransferase catalytic subunit of Polaromonas naphthalenivorans (strain CJ2).